Here is a 232-residue protein sequence, read N- to C-terminus: Anti-sigma-K factor RskA (232 aa).

Residues 1–91 (MTEPTDFQLL…QSRRQPRWRT (91 aa)) are Cytoplasmic-facing. The chain crosses the membrane as a helical span at residues 92–112 (AVFASAAAIAVGLGAFGLGVL). The Extracellular segment spans residues 113–232 (TRPSASPTVA…GTVLAELPLR (120 aa)).

Belongs to the anti-sigma-K factor family.

It is found in the cell membrane. Its function is as follows. An anti-sigma factor for extracytoplasmic function (ECF) sigma factor SigK. ECF sigma factors are held in an inactive form by an anti-sigma factor until released by regulated intramembrane proteolysis (RIP). RIP occurs when an extracytoplasmic signal triggers a concerted proteolytic cascade to transmit information and elicit cellular responses. The membrane-spanning regulatory substrate protein is first cut extracytoplasmically (site-1 protease, S1P), then within the membrane itself (site-2 protease, S2P, Rip1), while cytoplasmic proteases finish degrading the regulatory protein, liberating the sigma factor. The polypeptide is Anti-sigma-K factor RskA (rskA) (Mycobacterium ulcerans (strain Agy99)).